The primary structure comprises 474 residues: Glutamate--tRNA ligase 1 (474 aa).

A 'HIGH' region motif is present at residues 11 to 21; it reads PSPTGYLHIGG. The 'KMSKS' region signature appears at 240–244; the sequence is KLSKR. Residue K243 participates in ATP binding.

Belongs to the class-I aminoacyl-tRNA synthetase family. Glutamate--tRNA ligase type 1 subfamily. Monomer.

The protein localises to the cytoplasm. It catalyses the reaction tRNA(Glu) + L-glutamate + ATP = L-glutamyl-tRNA(Glu) + AMP + diphosphate. Catalyzes the attachment of glutamate to tRNA(Glu) in a two-step reaction: glutamate is first activated by ATP to form Glu-AMP and then transferred to the acceptor end of tRNA(Glu). This chain is Glutamate--tRNA ligase 1, found in Mesorhizobium japonicum (strain LMG 29417 / CECT 9101 / MAFF 303099) (Mesorhizobium loti (strain MAFF 303099)).